Reading from the N-terminus, the 214-residue chain is MRLTIEVIKEKIVERKLFKRNRKSIEVKILAGLLYYLGLSLRKVSLFLSQFEDISHESVRIYYHKIKEVLNEPERKERNLIAIDEIKLKVGDKYIYAWSAIDVETKECLGVYISKTRNYLDTILFVKSILKFCSNKPKILVDGGKWYPWALRKLGLEFEKVKFGLRNCVESFFSVLKRRTKAFFNRFPNNSKFDTVISWIKSFMMFYNWVKSLT.

This is an uncharacterized protein from Methanocaldococcus jannaschii (strain ATCC 43067 / DSM 2661 / JAL-1 / JCM 10045 / NBRC 100440) (Methanococcus jannaschii).